The chain runs to 956 residues: Translation initiation factor IF-2 (956 aa).

3 disordered regions span residues 53–102 (QFAG…QQEI), 116–315 (GKID…NRPA), and 334–371 (TLEKLQGKGGKSKAAKYRRDKRETHRQKSDDEQRALDE). Positions 58 to 102 (KGNKEASKEVGEEKRKEKEALRVEREKEIEDKRRQEEERQKQQEI) are enriched in basic and acidic residues. Polar residues predominate over residues 142–158 (VTPTQTEKPVQKETVQS). A compositionally biased stretch (basic and acidic residues) spans 166–186 (SEEKKVEKPIITEKKEVKAES). Positions 197–208 (TDPTTAEETITT) are enriched in low complexity. Over residues 209-229 (QYQKLSGTTLTGQTIDLSQFN) the composition is skewed to polar residues. The segment covering 240 to 257 (ITPNKPGTPGVGNNNNAN) has biased composition (low complexity). Residues 343-352 (GKSKAAKYRR) show a composition bias toward basic residues. The segment covering 353–371 (DKRETHRQKSDDEQRALDE) has biased composition (basic and acidic residues). A tr-type G domain is found at 454-622 (TRAPIVTVMG…KVLLEAEILD (169 aa)). Residues 463-470 (GHVDHGKT) are G1. GTP is bound at residue 463 to 470 (GHVDHGKT). Positions 488-492 (GITQH) are G2. The tract at residues 510–513 (DTPG) is G3. GTP contacts are provided by residues 510-514 (DTPGH) and 564-567 (NKVD). Residues 564–567 (NKVD) are G4. The G5 stretch occupies residues 600–602 (SAK).

The protein belongs to the TRAFAC class translation factor GTPase superfamily. Classic translation factor GTPase family. IF-2 subfamily.

The protein resides in the cytoplasm. In terms of biological role, one of the essential components for the initiation of protein synthesis. Protects formylmethionyl-tRNA from spontaneous hydrolysis and promotes its binding to the 30S ribosomal subunits. Also involved in the hydrolysis of GTP during the formation of the 70S ribosomal complex. This Flavobacterium johnsoniae (strain ATCC 17061 / DSM 2064 / JCM 8514 / BCRC 14874 / CCUG 350202 / NBRC 14942 / NCIMB 11054 / UW101) (Cytophaga johnsonae) protein is Translation initiation factor IF-2.